Reading from the N-terminus, the 118-residue chain is NADH-ubiquinone oxidoreductase chain 3 (118 aa).

3 helical membrane-spanning segments follow: residues 9-29 (IYLVISLLVSLILLGVPFLFA), 62-82 (LVSILFIIFDLEVTFFFPWAV), and 87-107 (IDLFGFWSMMAFLLILFIGSL).

Belongs to the complex I subunit 3 family.

It is found in the mitochondrion membrane. It catalyses the reaction a ubiquinone + NADH + 5 H(+)(in) = a ubiquinol + NAD(+) + 4 H(+)(out). Its function is as follows. Core subunit of the mitochondrial membrane respiratory chain NADH dehydrogenase (Complex I) that is believed to belong to the minimal assembly required for catalysis. Complex I functions in the transfer of electrons from NADH to the respiratory chain. The immediate electron acceptor for the enzyme is believed to be ubiquinone. The protein is NADH-ubiquinone oxidoreductase chain 3 (ND3) of Zea mays (Maize).